The following is a 283-amino-acid chain: Putative pyruvate, phosphate dikinase regulatory protein (283 aa).

154 to 161 (GVSRTSKT) contacts ADP.

The protein belongs to the pyruvate, phosphate/water dikinase regulatory protein family. PDRP subfamily.

It catalyses the reaction N(tele)-phospho-L-histidyl/L-threonyl-[pyruvate, phosphate dikinase] + ADP = N(tele)-phospho-L-histidyl/O-phospho-L-threonyl-[pyruvate, phosphate dikinase] + AMP + H(+). The enzyme catalyses N(tele)-phospho-L-histidyl/O-phospho-L-threonyl-[pyruvate, phosphate dikinase] + phosphate + H(+) = N(tele)-phospho-L-histidyl/L-threonyl-[pyruvate, phosphate dikinase] + diphosphate. Its function is as follows. Bifunctional serine/threonine kinase and phosphorylase involved in the regulation of the pyruvate, phosphate dikinase (PPDK) by catalyzing its phosphorylation/dephosphorylation. This Afipia carboxidovorans (strain ATCC 49405 / DSM 1227 / KCTC 32145 / OM5) (Oligotropha carboxidovorans) protein is Putative pyruvate, phosphate dikinase regulatory protein.